A 366-amino-acid chain; its full sequence is NADH-quinone oxidoreductase subunit D (366 aa).

Belongs to the complex I 49 kDa subunit family. NDH-1 is composed of 14 different subunits. Subunits NuoB, C, D, E, F, and G constitute the peripheral sector of the complex.

The protein resides in the cell membrane. It catalyses the reaction a quinone + NADH + 5 H(+)(in) = a quinol + NAD(+) + 4 H(+)(out). Functionally, NDH-1 shuttles electrons from NADH, via FMN and iron-sulfur (Fe-S) centers, to quinones in the respiratory chain. The immediate electron acceptor for the enzyme in this species is believed to be a menaquinone. Couples the redox reaction to proton translocation (for every two electrons transferred, four hydrogen ions are translocated across the cytoplasmic membrane), and thus conserves the redox energy in a proton gradient. This chain is NADH-quinone oxidoreductase subunit D, found in Geobacillus thermodenitrificans (strain NG80-2).